The following is a 121-amino-acid chain: Neuromedin-B (121 aa).

Residues 1-24 (MTRQAGSSWLLRGLLLFALFASGV) form the signal peptide. Methionine 56 bears the Methionine amide mark. Positions 60-121 (SLEPPSLSLV…RRLLEPLLQK (62 aa)) are excised as a propeptide.

Belongs to the bombesin/neuromedin-B/ranatensin family. In the hindbrain, expressed in the medulla surrounding the lateral half of the facial nucleus. Also expressed in the olfactory bulb and hippocampus. Detected in a subset of neurons distributed throughout the retrotrapezoid nucleus/parafacial respiratory group (RTN/pFRG). Within the RTN/pFRG, expressed in neuronal subpopulations distinct from those expressing Grp. Expressed in lung.

The protein resides in the secreted. It is found in the cell projection. It localises to the neuron projection. Stimulates smooth muscle contraction. Induces sighing by acting directly on the pre-Botzinger complex, a cluster of several thousand neurons in the ventrolateral medulla responsible for inspiration during respiratory activity. Contributes to the induction of sneezing following exposure to chemical irritants or allergens which causes release of NMB by nasal sensory neurons and activation of NMBR-expressing neurons in the sneeze-evoking region of the brainstem. These in turn activate neurons of the caudal ventral respiratory group, giving rise to the sneeze reflex. Contributes to induction of acute itch, possibly through activation of the NMBR receptor on dorsal root ganglion neurons. Increases expression of NMBR and steroidogenic mediators STAR, CYP11A1 and HSD3B1 in Leydig cells, induces secretion of testosterone by Leydig cells and also promotes Leydig cell proliferation. Plays a role in the innate immune response to influenza A virus infection by enhancing interferon alpha expression and reducing expression of IL6. Plays a role in CSF1-induced proliferation of osteoclast precursors by contributing to the positive regulation of the expression of the CSF1 receptor CSF1R. In Mus musculus (Mouse), this protein is Neuromedin-B (Nmb).